A 346-amino-acid chain; its full sequence is Protein PXR1 (346 aa).

Disordered stretches follow at residues 1–27 (MGLAAPKNKRKLGNDPNNTRWSRNTEN) and 146–315 (EDAE…QVSV). The span at 15–27 (DPNNTRWSRNTEN) shows a compositional bias: polar residues. A G-patch domain is found at 25 to 79 (TENFGHRMLRSQGWEPGQYLGPQDASHAVYHTAASASHIKVALKEDNLGLGAKMN). Basic residues predominate over residues 215-230 (SKSKKSHKSKKEKKRR). Positions 235–245 (ASDEQESEDEE) are enriched in acidic residues. Basic residues predominate over residues 249 to 274 (KRRKKEKKERKERRREKREKKLKKKQ). Over residues 293–314 (GVDTGASTPVASGTSTPVSQVS) the composition is skewed to polar residues.

Belongs to the PINX1 family.

It is found in the nucleus. The protein resides in the nucleolus. Functionally, involved in rRNA-processing at A0, A1 and A2 sites and negatively regulates telomerase. This chain is Protein PXR1 (PXR1), found in Pyricularia oryzae (strain 70-15 / ATCC MYA-4617 / FGSC 8958) (Rice blast fungus).